Reading from the N-terminus, the 20-residue chain is T cell receptor alpha joining 42 (20 aa).

Positions 1-20 (YGGSQGNLIFGKGTKLSVKP) are disordered.

Alpha-beta TR is a heterodimer composed of an alpha and beta chain; disulfide-linked. The alpha-beta TR is associated with the transmembrane signaling CD3 coreceptor proteins to form the TR-CD3 (TcR or TCR). The assembly of alpha-beta TR heterodimers with CD3 occurs in the endoplasmic reticulum where a single alpha-beta TR heterodimer associates with one CD3D-CD3E heterodimer, one CD3G-CD3E heterodimer and one CD247 homodimer forming a stable octameric structure. CD3D-CD3E and CD3G-CD3E heterodimers preferentially associate with TR alpha and TR beta chains, respectively. The association of the CD247 homodimer is the last step of TcR assembly in the endoplasmic reticulum and is required for transport to the cell surface.

Its subcellular location is the cell membrane. Functionally, j region of the variable domain of T cell receptor (TR) alpha chain that participates in the antigen recognition. Alpha-beta T cell receptors are antigen specific receptors which are essential to the immune response and are present on the cell surface of T lymphocytes. Recognize peptide-major histocompatibility (MH) (pMH) complexes that are displayed by antigen presenting cells (APC), a prerequisite for efficient T cell adaptive immunity against pathogens. Binding of alpha-beta TR to pMH complex initiates TR-CD3 clustering on the cell surface and intracellular activation of LCK that phosphorylates the ITAM motifs of CD3G, CD3D, CD3E and CD247 enabling the recruitment of ZAP70. In turn, ZAP70 phosphorylates LAT, which recruits numerous signaling molecules to form the LAT signalosome. The LAT signalosome propagates signal branching to three major signaling pathways, the calcium, the mitogen-activated protein kinase (MAPK) kinase and the nuclear factor NF-kappa-B (NF-kB) pathways, leading to the mobilization of transcription factors that are critical for gene expression and essential for T cell growth and differentiation. The T cell repertoire is generated in the thymus, by V-(D)-J rearrangement. This repertoire is then shaped by intrathymic selection events to generate a peripheral T cell pool of self-MH restricted, non-autoaggressive T cells. Post-thymic interaction of alpha-beta TR with the pMH complexes shapes TR structural and functional avidity. This Homo sapiens (Human) protein is T cell receptor alpha joining 42.